A 154-amino-acid chain; its full sequence is MAARLCCQLDPARDVLCLRPVGAESSGRTLPGSLGAVPPPSSSAVPADNGSHLSLRGLPVCSFSSAGPCALRFTSARRMETTVNAPWSLPTVLHKRTLGLSGRSMTWIEDYIKDCVFKDWEELGEEIRLKVFVLGGCRHKLVCSPAPCNFFTSA.

The segment at 28-48 (RTLPGSLGAVPPPSSSAVPAD) is disordered. The segment covering 30–46 (LPGSLGAVPPPSSSAVP) has biased composition (low complexity). The tract at residues 68–117 (PCALRFTSARRMETTVNAPWSLPTVLHKRTLGLSGRSMTWIEDYIKDCVF) is mitochondrial targeting sequence.

This sequence belongs to the orthohepadnavirus protein X family. May form homodimer. May interact with host CEBPA, CFLAR, CREB1, DDB1, E4F1, HBXIP, HSPD1/HSP60, NFKBIA, POLR2E and SMAD4. Interacts with host SMC5-SMC6 complex and induces its degradation. Interacts with host TRPC4AP; leading to prevent ubiquitination of TRPC4AP. Interacts with host PLSCR1; this interaction promotes ubiquitination and degradation of HBx and impairs HBx-mediated cell proliferation. Post-translationally, a fraction may be phosphorylated in insect cells and HepG2 cells, a human hepatoblastoma cell line. Phosphorylated in vitro by host protein kinase C or mitogen-activated protein kinase. N-acetylated in insect cells.

The protein resides in the host cytoplasm. It localises to the host nucleus. The protein localises to the host mitochondrion. Multifunctional protein that plays a role in silencing host antiviral defenses and promoting viral transcription. Does not seem to be essential for HBV infection. May be directly involved in development of cirrhosis and liver cancer (hepatocellular carcinoma). Most of cytosolic activities involve modulation of cytosolic calcium. The effect on apoptosis is controversial depending on the cell types in which the studies have been conducted. May induce apoptosis by localizing in mitochondria and causing loss of mitochondrial membrane potential. May also modulate apoptosis by binding host CFLAR, a key regulator of the death-inducing signaling complex (DISC). Promotes viral transcription by using the host E3 ubiquitin ligase DDB1 to target the SMC5-SMC6 complex to proteasomal degradation. This host complex would otherwise bind to viral episomal DNA, and prevents its transcription. Moderately stimulates transcription of many different viral and cellular transcription elements. Promoters and enhancers stimulated by HBx contain DNA binding sites for NF-kappa-B, AP-1, AP-2, c-EBP, ATF/CREB, or the calcium-activated factor NF-AT. This Homo sapiens (Human) protein is Protein X.